A 300-amino-acid chain; its full sequence is Apolipoprotein E (300 aa).

The first 18 residues, 1 to 18 (MKVLWAVLVVTLLAGCQA), serve as a signal peptide directing secretion. Residues 74-246 (VLMEDTMKEV…RLDEVREQME (173 aa)) form an 8 X 22 AA approximate tandem repeats region. Tandem repeats lie at residues 75–95 (LMED…QELA), 96–117 (PMAE…ARLG), 118–139 (ADME…SMLG), 140–161 (HSAE…KRLL), 162–183 (RDAE…EGAE), 184–205 (RSVS…LRTA), 206–224 (ALTS…ERLR), and 225–243 (GRLE…EVRE). A Methionine sulfoxide modification is found at M137. At S141 the chain carries Phosphoserine. Positions 152–162 (HLRKLRKRLLR) are LDL and other lipoprotein receptors binding. 156–159 (LRKR) contributes to the heparin binding site. The interval 204–274 (TAALTSQPLQ…GWFEPMMEDI (71 aa)) is lipid-binding and lipoprotein association. 220–227 (GERLRGRL) contributes to the heparin binding site. Residues 262–274 (RLKGWFEPMMEDI) form a specificity for association with VLDL region.

It belongs to the apolipoprotein A1/A4/E family. Homotetramer. May interact with ABCA1; functionally associated with ABCA1 in the biogenesis of HDLs. May interact with APP/A4 amyloid-beta peptide; the interaction is extremely stable in vitro but its physiological significance is unclear. May interact with MAPT. May interact with MAP2. In the cerebrospinal fluid, interacts with secreted SORL1. Interacts with PMEL; this allows the loading of PMEL luminal fragment on ILVs to induce fibril nucleation. APOE exists as multiple glycosylated and sialylated glycoforms within cells and in plasma. The extent of glycosylation and sialylation are tissue and context specific. In terms of processing, glycated in plasma VLDL. Post-translationally, phosphorylated by FAM20C in the extracellular medium.

Its subcellular location is the secreted. It is found in the extracellular space. The protein localises to the extracellular matrix. The protein resides in the extracellular vesicle. It localises to the endosome. Its subcellular location is the multivesicular body. In terms of biological role, APOE is an apolipoprotein, a protein associating with lipid particles, that mainly functions in lipoprotein-mediated lipid transport between organs via the plasma and interstitial fluids. APOE is a core component of plasma lipoproteins and is involved in their production, conversion and clearance. Apolipoproteins are amphipathic molecules that interact both with lipids of the lipoprotein particle core and the aqueous environment of the plasma. As such, APOE associates with chylomicrons, chylomicron remnants, very low density lipoproteins (VLDL) and intermediate density lipoproteins (IDL) but shows a preferential binding to high-density lipoproteins (HDL). It also binds a wide range of cellular receptors including the LDL receptor/LDLR, the LDL receptor-related proteins LRP1, LRP2 and LRP8 and the very low-density lipoprotein receptor/VLDLR that mediate the cellular uptake of the APOE-containing lipoprotein particles. Finally, APOE also has a heparin-binding activity and binds heparan-sulfate proteoglycans on the surface of cells, a property that supports the capture and the receptor-mediated uptake of APOE-containing lipoproteins by cells. A main function of APOE is to mediate lipoprotein clearance through the uptake of chylomicrons, VLDLs, and HDLs by hepatocytes. APOE is also involved in the biosynthesis by the liver of VLDLs as well as their uptake by peripheral tissues ensuring the delivery of triglycerides and energy storage in muscle, heart and adipose tissues. By participating in the lipoprotein-mediated distribution of lipids among tissues, APOE plays a critical role in plasma and tissues lipid homeostasis. APOE is also involved in two steps of reverse cholesterol transport, the HDLs-mediated transport of cholesterol from peripheral tissues to the liver, and thereby plays an important role in cholesterol homeostasis. First, it is functionally associated with ABCA1 in the biogenesis of HDLs in tissues. Second, it is enriched in circulating HDLs and mediates their uptake by hepatocytes. APOE also plays an important role in lipid transport in the central nervous system, regulating neuron survival and sprouting. The sequence is that of Apolipoprotein E (APOE) from Dinomys branickii (Pacarana).